Reading from the N-terminus, the 220-residue chain is Ribonuclease HII (220 aa).

Residues 27 to 220 enclose the RNase H type-2 domain; the sequence is CIIVGVDEVG…SKISYMFKNS (194 aa). Residues Asp33, Glu34, and Asp128 each coordinate a divalent metal cation.

Belongs to the RNase HII family. It depends on Mn(2+) as a cofactor. Requires Mg(2+) as cofactor.

It localises to the cytoplasm. It catalyses the reaction Endonucleolytic cleavage to 5'-phosphomonoester.. Functionally, endonuclease that specifically degrades the RNA of RNA-DNA hybrids. The chain is Ribonuclease HII from Ehrlichia ruminantium (strain Gardel).